Reading from the N-terminus, the 1053-residue chain is Probable sucrose-phosphate synthase (1053 aa).

The segment covering 103–115 (RRQERERGRREAV) has biased composition (basic and acidic residues). 2 disordered regions span residues 103 to 127 (RRQE…EGEK) and 673 to 693 (LRSI…DSLR).

It belongs to the glycosyltransferase 1 family. As to quaternary structure, homodimer or homotetramer.

The enzyme catalyses beta-D-fructose 6-phosphate + UDP-alpha-D-glucose = sucrose 6(F)-phosphate + UDP + H(+). It participates in glycan biosynthesis; sucrose biosynthesis; sucrose from D-fructose 6-phosphate and UDP-alpha-D-glucose: step 1/2. Its activity is regulated as follows. Activity is regulated by phosphorylation and moderated by concentration of metabolites and light. Functionally, plays a role in photosynthetic sucrose synthesis by catalyzing the rate-limiting step of sucrose biosynthesis from UDP-glucose and fructose- 6-phosphate. Involved in the regulation of carbon partitioning in the leaves of plants. May regulate the synthesis of sucrose and therefore play a major role as a limiting factor in the export of photoassimilates out of the leaf. Plays a role for sucrose availability that is essential for plant growth and fiber elongation. The polypeptide is Probable sucrose-phosphate synthase (SPS) (Solanum tuberosum (Potato)).